Reading from the N-terminus, the 245-residue chain is Ubiquinone/menaquinone biosynthesis C-methyltransferase UbiE (245 aa).

S-adenosyl-L-methionine contacts are provided by residues Thr71, Asp92, and 118–119; that span reads DA.

It belongs to the class I-like SAM-binding methyltransferase superfamily. MenG/UbiE family.

The catalysed reaction is a 2-demethylmenaquinol + S-adenosyl-L-methionine = a menaquinol + S-adenosyl-L-homocysteine + H(+). It carries out the reaction a 2-methoxy-6-(all-trans-polyprenyl)benzene-1,4-diol + S-adenosyl-L-methionine = a 5-methoxy-2-methyl-3-(all-trans-polyprenyl)benzene-1,4-diol + S-adenosyl-L-homocysteine + H(+). It functions in the pathway quinol/quinone metabolism; menaquinone biosynthesis; menaquinol from 1,4-dihydroxy-2-naphthoate: step 2/2. The protein operates within cofactor biosynthesis; ubiquinone biosynthesis. Functionally, methyltransferase required for the conversion of demethylmenaquinol (DMKH2) to menaquinol (MKH2) and the conversion of 2-polyprenyl-6-methoxy-1,4-benzoquinol (DDMQH2) to 2-polyprenyl-3-methyl-6-methoxy-1,4-benzoquinol (DMQH2). The chain is Ubiquinone/menaquinone biosynthesis C-methyltransferase UbiE from Neisseria meningitidis serogroup B (strain ATCC BAA-335 / MC58).